Reading from the N-terminus, the 817-residue chain is Myosin-A (817 aa).

Ser19 is subject to Phosphoserine. The Myosin motor domain maps to 97–771; it reads MSFGDIGLLN…GAKMLSKIQR (675 aa). Residue 191-198 coordinates ATP; sequence GESGAGKT. The tract at residues 661 to 671 is actin-binding; sequence PHFIRCIKPNE. The tail stretch occupies residues 773–817; sequence KLVEWENCVSVIEAAIMKYKHKQNVENNVSSLMRVQAHIRKRMVA.

This sequence belongs to the TRAFAC class myosin-kinesin ATPase superfamily. Myosin family. As to quaternary structure, interacts with ACT1.

The protein localises to the cell membrane. Myosins are actin-based motor molecules with ATPase activity. Unconventional myosins serve in intracellular movements. Their highly divergent tails are presumed to bind to membranous compartments, which would be moved relative to actin filaments. In Plasmodium yoelii yoelii, this protein is Myosin-A.